Reading from the N-terminus, the 52-residue chain is Phospholamban (52 aa).

Met1 carries the N-acetylmethionine modification. The Cytoplasmic portion of the chain corresponds to 1 to 31 (MDKVQYLTRSAIRRASTIEMPQQARQNLQNL). Position 16 is a phosphoserine; by PKA and DMPK (Ser16). Thr17 is modified (phosphothreonine; by CaMK2). The helical transmembrane segment at 32-52 (FINFCLILICLLLICIIVMLL) threads the bilayer. Cys36 carries the S-palmitoyl cysteine lipid modification.

The protein belongs to the phospholamban family. In terms of assembly, homopentamer. Can also form heterooligomers with other sarcoplasmic/endoplasmic reticulum calcium ATPase (SERCA) regulators ARLN, ERLN, SLN and STRIT1/DWORF. Monomer. Interacts with HAX1. Interacts as a monomer with ATP2A2; the interaction decreases ATP2A2 Ca(2+) affinity. Interacts with VMP1; VMP1 competes with PLN and SLN to prevent them from forming an inhibitory complex with ATP2A2. Interacts with S100A1 in a Ca(2+)-dependent manner. Phosphorylation by DMPK may stimulate sarcoplasmic reticulum calcium uptake in cardiomyocytes. Phosphorylation by PKA abolishes the inhibition of ATP2A2-mediated calcium uptake. Phosphorylated at Thr-17 by CaMK2, and in response to beta-adrenergic stimulation. In terms of processing, palmitoylated by ZDHHC16, promoting formation of the homopentamer. Post-translationally, in elongated spermatids, proteolytically cleaved by SPPL2C which modulates intracellular Ca(2+) homeostasis. Heart.

It is found in the endoplasmic reticulum membrane. Its subcellular location is the sarcoplasmic reticulum membrane. The protein resides in the mitochondrion membrane. The protein localises to the membrane. Its function is as follows. Reversibly inhibits the activity of ATP2A2/SERCA2 in cardiac sarcoplasmic reticulum by decreasing the apparent affinity of the ATPase for Ca(2+). Binds preferentially to the ATP-bound E1 conformational form of ATP2A2 which predominates at low Ca(2+) concentrations during the diastolic phase of the cardiac cycle. Inhibits ATP2A2 Ca(2+) affinity by disrupting its allosteric activation by ATP. Modulates the contractility of the heart muscle in response to physiological stimuli via its effects on ATP2A2. Modulates calcium re-uptake during muscle relaxation and plays an important role in calcium homeostasis in the heart muscle. The degree of ATP2A2 inhibition depends on the oligomeric state of PLN. ATP2A2 inhibition is alleviated by PLN phosphorylation. Also inhibits the activity of ATP2A3/SERCA3. Controls intracellular Ca(2+) levels in elongated spermatids and may play a role in germ cell differentiation. In the thalamic reticular nucleus of the brain, plays a role in the regulation of sleep patterns and executive functioning. The polypeptide is Phospholamban (Canis lupus familiaris (Dog)).